The sequence spans 77 residues: Conotoxin G11.1 (77 aa).

The signal sequence occupies residues 1 to 20 (MKLFLAIVLILMLQFLSTGA). The propeptide occupies 21–45 (ETSDNHASRSTTALRDWLLGPKAKR). 4 disulfides stabilise this stretch: cysteine 46–cysteine 60, cysteine 53–cysteine 65, cysteine 59–cysteine 69, and cysteine 64–cysteine 76.

The protein belongs to the conotoxin I3 superfamily. As to expression, expressed by the venom duct.

Its subcellular location is the secreted. In terms of biological role, may embed in the membrane and bind to the voltage sensor domain of a ion channel. Does not induce paralysis when injected in fish, leading to the hypothesis that it may be part of the sedative nirvana cabal. This Conus geographus (Geography cone) protein is Conotoxin G11.1.